The chain runs to 83 residues: Large ribosomal subunit protein bL31B (83 aa).

The protein belongs to the bacterial ribosomal protein bL31 family. Type B subfamily. In terms of assembly, part of the 50S ribosomal subunit.

In Lacticaseibacillus casei (strain BL23) (Lactobacillus casei), this protein is Large ribosomal subunit protein bL31B.